Reading from the N-terminus, the 205-residue chain is Ribosomal RNA small subunit methyltransferase G (205 aa).

Residues glycine 66, phenylalanine 71, 119–120, and arginine 135 each bind S-adenosyl-L-methionine; that span reads IE.

Belongs to the methyltransferase superfamily. RNA methyltransferase RsmG family.

It localises to the cytoplasm. The catalysed reaction is guanosine(527) in 16S rRNA + S-adenosyl-L-methionine = N(7)-methylguanosine(527) in 16S rRNA + S-adenosyl-L-homocysteine. In terms of biological role, specifically methylates the N7 position of guanine in position 527 of 16S rRNA. The polypeptide is Ribosomal RNA small subunit methyltransferase G (Rhizobium johnstonii (strain DSM 114642 / LMG 32736 / 3841) (Rhizobium leguminosarum bv. viciae)).